We begin with the raw amino-acid sequence, 436 residues long: Mannitol-binding protein (436 aa).

An N-terminal signal peptide occupies residues 1-22 (MNDSIKACLAAACLALPLLAQG).

It belongs to the bacterial solute-binding protein 1 family.

Its subcellular location is the periplasm. In terms of biological role, binds mannitol with high affinity. The protein is Mannitol-binding protein of Pseudomonas aeruginosa (strain ATCC 15692 / DSM 22644 / CIP 104116 / JCM 14847 / LMG 12228 / 1C / PRS 101 / PAO1).